A 153-amino-acid polypeptide reads, in one-letter code: Ribosomal RNA large subunit methyltransferase H (153 aa).

Residues L70, G102, and 121-126 (LSRMTF) contribute to the S-adenosyl-L-methionine site.

It belongs to the RNA methyltransferase RlmH family. Homodimer.

Its subcellular location is the cytoplasm. It catalyses the reaction pseudouridine(1915) in 23S rRNA + S-adenosyl-L-methionine = N(3)-methylpseudouridine(1915) in 23S rRNA + S-adenosyl-L-homocysteine + H(+). Its function is as follows. Specifically methylates the pseudouridine at position 1915 (m3Psi1915) in 23S rRNA. The protein is Ribosomal RNA large subunit methyltransferase H of Geotalea uraniireducens (strain Rf4) (Geobacter uraniireducens).